A 453-amino-acid chain; its full sequence is ACT domain-containing protein ACR3 (453 aa).

4 ACT domains span residues 37–112 (LVKV…SASQ), 130–212 (SIEI…KFAR), 266–341 (VINV…RVSE), and 344–423 (SLEL…VPSR).

Expressed in roots, cotyledons, rosette and cauline leaves, sepals, style, and pedicels and tips of young developing siliques.

Functionally, may bind amino acids. The sequence is that of ACT domain-containing protein ACR3 from Arabidopsis thaliana (Mouse-ear cress).